A 211-amino-acid chain; its full sequence is Ubiquitin-conjugating enzyme E2 S (211 aa).

The UBC core domain maps to 11 to 157; that stretch reads HVIRQVYKEV…ARLMTEIHAH (147 aa). Cys95 serves as the catalytic Glycyl thioester intermediate. A compositionally biased stretch (basic and acidic residues) spans 157–167; it reads HSSSLRGKDPT. The disordered stretch occupies residues 157–211; the sequence is HSSSLRGKDPTDPCSSASVTGALGDGPMAKKHAGDRDKKLAAKKKTDKKRALRRL. The segment covering 197–211 has biased composition (basic residues); sequence AAKKKTDKKRALRRL.

The protein belongs to the ubiquitin-conjugating enzyme family.

It carries out the reaction S-ubiquitinyl-[E1 ubiquitin-activating enzyme]-L-cysteine + [E2 ubiquitin-conjugating enzyme]-L-cysteine = [E1 ubiquitin-activating enzyme]-L-cysteine + S-ubiquitinyl-[E2 ubiquitin-conjugating enzyme]-L-cysteine.. The protein operates within protein modification; protein ubiquitination. Its function is as follows. Catalyzes the covalent attachment of ubiquitin to other proteins. Acts as an essential factor of the anaphase promoting complex/cyclosome (APC/C), a cell cycle-regulated ubiquitin ligase that controls progression through mitosis. Acts by specifically elongating 'Lys-11'-linked polyubiquitin chains initiated by the E2 enzyme ube2c/ubch10 on APC/C substrates, enhancing the degradation of APC/C substrates by the proteasome and promoting mitotic exit. The polypeptide is Ubiquitin-conjugating enzyme E2 S (ube2s) (Aquarana catesbeiana (American bullfrog)).